The primary structure comprises 914 residues: MATIHVDGKEYDVNGADNLLQACLSLGLDIPYFCWHPALGSVGACRQCAVKQYQNADDTRGRLVMSCMTPATDGTFISIDDSEAKAFRESVVEWLMTNHPHDCPVCEEGGNCHLQDMTVMTGHSFRRYRFTKRTHQNQDLGPFISHEMNRCIACYRCVRYYKDYADGTDLGVYGAHDNVYFGRTESGTLESEFSGNLVEVCPTGVFTDKTHSERYNRKWDMQFAPSICQQCSVGCNTSPGERYGELRRIENRYNGSVNHYFMCDRGRFGYGYVNLKDRPRQPQQLRGSDWIHLNADQVMQGAADILRQAKKTIGIGSPRASLESNFALRELVGAENFYTGIAAGEQQRLQLMLKVLREGGIYTPALREIESYDAVLILGEDLTQTGARIALSVRQAVKGKAREMAAAQKVADWQIAAIMNIGQHAKHPLFITNVDNTRMDDIAAWNYRAPVDDQARLGFAIAHALDESAPAVADLDRSLKGKVDIIVQALAGAKKPLIITGSSAGSDAIIEAAANVAKALKNRGSDVGITFVASAANSIGLSMIGGGSLDQALELLTRGEADSAIVMENDLYRHAAKDKVDAALDNVANLIVVDHQRTAIMDKANLILSAASFAESDGTLVNQEGRAQRFFQVYDPTYYDDPKKPESRSIMLESWRWLHSLHSTYTSRHVDWTQLDHVIAACVEALPQLQGIVEAAPDATFRIRGQRLARSPHRYSGRTAMRADISVHEPRQPQDIDTPFSFSMEGNNSPLADRQQIPFAWAPGWNSPQAWNKFQAEVGGSLRFGDPGVRLIEAGEGTLDYFDSIPAAFTATAGNWQIAPYYHLFGSEEMSQRSDVIQQRMPTPYVMVNPADAAALGVNLGTLVEFNCAGQTLRLPVRLSDTLAPGQVGLPLGLPGIPPILVGARVEDLREAVQ.

Positions 1 to 83 (MATIHVDGKE…GTFISIDDSE (83 aa)) constitute a 2Fe-2S ferredoxin-type domain. Cys34, Cys45, Cys48, and Cys67 together coordinate [2Fe-2S] cluster. Residues 83–122 (EAKAFRESVVEWLMTNHPHDCPVCEEGGNCHLQDMTVMTG) form the 4Fe-4S His(Cys)3-ligated-type domain. Residues His99, Cys103, Cys106, Cys112, Cys151, Cys154, Cys157, Cys201, Cys228, Cys231, Cys235, and Cys263 each coordinate [4Fe-4S] cluster. The 4Fe-4S Mo/W bis-MGD-type domain maps to 221–277 (MQFAPSICQQCSVGCNTSPGERYGELRRIENRYNGSVNHYFMCDRGRFGYGYVNLKD).

It belongs to the complex I 75 kDa subunit family. In terms of assembly, composed of 13 different subunits. Subunits NuoCD, E, F, and G constitute the peripheral sector of the complex. The cofactor is [2Fe-2S] cluster. Requires [4Fe-4S] cluster as cofactor.

The enzyme catalyses a quinone + NADH + 5 H(+)(in) = a quinol + NAD(+) + 4 H(+)(out). Functionally, NDH-1 shuttles electrons from NADH, via FMN and iron-sulfur (Fe-S) centers, to quinones in the respiratory chain. The immediate electron acceptor for the enzyme in this species is believed to be ubiquinone. Couples the redox reaction to proton translocation (for every two electrons transferred, four hydrogen ions are translocated across the cytoplasmic membrane), and thus conserves the redox energy in a proton gradient. This Yersinia pestis protein is NADH-quinone oxidoreductase subunit G (nuoG).